A 155-amino-acid polypeptide reads, in one-letter code: Protein SprT-like (155 aa).

The region spanning 7–145 (QRHMEEVSLQ…GSCGGKLIQI (139 aa)) is the SprT-like domain. Histidine 67 contacts Zn(2+). The active site involves glutamate 68. Histidine 71 contributes to the Zn(2+) binding site.

Belongs to the SprT family. It depends on Zn(2+) as a cofactor.

The protein resides in the cytoplasm. This is Protein SprT-like from Listeria monocytogenes serotype 4a (strain HCC23).